A 382-amino-acid polypeptide reads, in one-letter code: Enoyl-[acyl-carrier-protein] reductase, mitochondrial (382 aa).

The transit peptide at 1-17 (MSSFLSKRFLSFSQRAM) directs the protein to the mitochondrion. Catalysis depends on Tyr-77, which acts as the Proton donor. NADP(+) contacts are provided by residues Asn-159, 187 to 190 (TSSV), 210 to 212 (RDR), 285 to 288 (YGGM), 310 to 312 (FWV), and Lys-375.

Belongs to the zinc-containing alcohol dehydrogenase family. Quinone oxidoreductase subfamily. Homodimer.

Its subcellular location is the mitochondrion matrix. The enzyme catalyses a 2,3-saturated acyl-[ACP] + NADP(+) = a (2E)-enoyl-[ACP] + NADPH + H(+). Functionally, catalyzes the NADPH-dependent reduction of trans-2-enoyl thioesters in mitochondrial fatty acid synthesis (fatty acid synthesis type II). Fatty acid chain elongation in mitochondria uses acyl carrier protein (ACP) as an acyl group carrier, but the enzyme accepts both ACP and CoA thioesters as substrates in vitro. Required for respiration and the maintenance of the mitochondrial compartment. The sequence is that of Enoyl-[acyl-carrier-protein] reductase, mitochondrial (ETR1) from Kluyveromyces lactis (strain ATCC 8585 / CBS 2359 / DSM 70799 / NBRC 1267 / NRRL Y-1140 / WM37) (Yeast).